A 431-amino-acid chain; its full sequence is Glutamate--tRNA ligase 1 (431 aa).

The 'HIGH' region motif lies at 6–16 (PSPTGDMHIGN). A 'KMSKS' region motif is present at residues 235 to 239 (KMSKR). Lys-238 lines the ATP pocket.

Belongs to the class-I aminoacyl-tRNA synthetase family. Glutamate--tRNA ligase type 1 subfamily. Monomer.

The protein localises to the cytoplasm. It catalyses the reaction tRNA(Glu) + L-glutamate + ATP = L-glutamyl-tRNA(Glu) + AMP + diphosphate. Its function is as follows. Catalyzes the attachment of glutamate to tRNA(Glu) in a two-step reaction: glutamate is first activated by ATP to form Glu-AMP and then transferred to the acceptor end of tRNA(Glu). This chain is Glutamate--tRNA ligase 1, found in Campylobacter curvus (strain 525.92).